The following is an 89-amino-acid chain: Large ribosomal subunit protein bL27 (89 aa).

The tract at residues 1–21 (MAHKKGASSSRNGRDSNAQRL) is disordered. Residues 7 to 19 (ASSSRNGRDSNAQ) show a composition bias toward polar residues.

It belongs to the bacterial ribosomal protein bL27 family.

The chain is Large ribosomal subunit protein bL27 from Frankia alni (strain DSM 45986 / CECT 9034 / ACN14a).